Reading from the N-terminus, the 187-residue chain is Large ribosomal subunit protein eL18y (187 aa).

Residues 151–187 (FGPAPGVPHSHSKPYVRAKGRKFEKARGKRKSRGFKV) form a disordered region. Basic residues-rich tracts occupy residues 160–170 (SHSKPYVRAKG) and 177–187 (RGKRKSRGFKV).

The protein belongs to the eukaryotic ribosomal protein eL18 family. As to quaternary structure, interacts with NIK1. Interacts directly with EXA1. As to expression, ubiquitous.

It is found in the cytoplasm. This Arabidopsis thaliana (Mouse-ear cress) protein is Large ribosomal subunit protein eL18y (RPL18B).